A 1284-amino-acid polypeptide reads, in one-letter code: MSSGDPAHLGLCLWLWLGATLGREQVQASGLLRLAVLPEDRLQMKWRESEGSGLGYLVQVKPMAGDSEQEVILTTKTPKATVGGLSPSKGYTLQIFELTGSGRFLLARREFVIEDLKSSSLDRSSQRPLGSGAPEPTPSHTGSPDPEQASEPQVAFTPSQDPRTPAGPQFRCLPPVPADMVFLVDGSWSIGHSHFQQVKDFLASVIAPFEIGPDKVQVGLTQYSGDAQTEWDLNSLSTKEQVLAAVRRLRYKGGNTFTGLALTHVLGQNLQPAAGLRPEAAKVVILVTDGKSQDDVHTAARVLKDLGVNVFAVGVKNADEAELRLLASPPRDITVHSVLDFLQLGALAGLLSRLICQRLQGGSPRQGPAAAPALDTLPAPTSLVLSQVTSSSIRLSWTPAPRHPLKYLIVWRASRGGTPREVVVEGPAASTELHNLASRTEYLVSVFPIYEGGVGEGLRGLVTTAPLPPPRALTLAAVTPRTVHLTWQPSAGATHYLVRCSPASPKGEEEEREVQVGRPEVLLDGLEPGRDYEVSVQSLRGPEGSEARGIRARTPTLAPPRHLGFSDVSHDAARVFWEGAPRPVRLVRVTYVSSEGGHSGQTEAPGNATSATLGPLSSSTTYTVRVTCLYPGGGSSTLTGRVTTKKAPSPSQLSMTELPGDAVQLAWVAAAPSGVLVYQITWTPLGEGKAHEISVPGNLGTAVLPGLGRHTEYDVTILAYYRDGARSDPVSLRYTPSTVSRSPPSNLALASETPDSLQVSWTPPLGRVLHYWLTYAPASGLGPEKSVSVPGARSHVTLPDLQAATKYRVLVSAIYAAGRSEAVSATGQTACPALRPDGSLPGFDLMVAFSLVEKAYASIRGVAMEPSAFGGTPTFTLFKDAQLTRRVSDVYPAPLPPEHTIVFLVRLLPETPREAFALWQMTAEDFQPLLGVLLDAGKKSLTYFHRDPRAALQEATFDPQEVRKIFFGSFHKVHVAVGRSKVRLYVDCRKVAERPLGEMGSPPAAGFVTLGRLAKARGPRSSSAAFQLQMLQIVCSDTWADEDRCCELPASRDGETCPAFVSACSCSSETPGPPGPQGPPGLPGRNGTPGEQGFPGPRGPPGVKGEKGDHGLPGLQGHPGHQGIPGRVGLQGPKGMRGLEGTAGLPGPPGPRGFQGMAGARGTSGERGPPGTVGPTGLPGPKGERGEKGEPQSLATLYQLVSQASHVSKFDSFHENTRPPMPILEQKLEPGTEPLGSPGTRSKALVPGEWGRGGRHLEGRGEPGAVGQMGSPGQQGASTQGLWE.

Positions 1–22 are cleaved as a signal peptide; sequence MSSGDPAHLGLCLWLWLGATLG. The region spanning 28 to 119 is the Fibronectin type-III 1 domain; sequence ASGLLRLAVL…EFVIEDLKSS (92 aa). Residues 122–171 form a disordered region; it reads DRSSQRPLGSGAPEPTPSHTGSPDPEQASEPQVAFTPSQDPRTPAGPQFR. Residues 179–354 form the VWFA domain; that stretch reads DMVFLVDGSW…GALAGLLSRL (176 aa). Fibronectin type-III domains lie at 379–468, 469–559, 560–647, 649–738, and 743–833; these read APTS…APLP, PPRA…TLAP, PRHL…TKKA, SPSQ…TPST, and PPSN…ACPA. An N-linked (GlcNAc...) asparagine glycan is attached at N607. The Laminin G-like domain occupies 842–1037; the sequence is GFDLMVAFSL…LQMLQIVCSD (196 aa). Disordered stretches follow at residues 1065 to 1190 and 1212 to 1284; these read SCSS…EKGE and SFHE…GLWE. Residues 1071–1082 show a composition bias toward pro residues; the sequence is PGPPGPQGPPGL. Collagen-like domains follow at residues 1071–1127 and 1133–1190; these read PGPP…IPGR and PKGM…EKGE. Low complexity-rich tracts occupy residues 1112–1125 and 1166–1181; these read LPGLQGHPGHQGIP and ERGPPGTVGPTGLPGP. Residues 1271 to 1284 are compositionally biased toward polar residues; sequence SPGQQGASTQGLWE.

As to expression, high expression in heart, lung, liver, skeletal muscle, kidney, pancreas, spleen, testis, ovary, subthalamic nucleus and fetal liver. Weak expression in other tissues tested.

It localises to the secreted. It is found in the extracellular space. In terms of biological role, probable collagen protein. The protein is Collagen alpha-1(XX) chain (COL20A1) of Homo sapiens (Human).